Here is a 51-residue protein sequence, read N- to C-terminus: Ribosome biogenesis protein Nop10 (51 aa).

It belongs to the NOP10 family.

Its function is as follows. Involved in ribosome biogenesis; more specifically in 18S rRNA pseudouridylation and in cleavage of pre-rRNA. In Methanococcus maripaludis (strain C6 / ATCC BAA-1332), this protein is Ribosome biogenesis protein Nop10.